Consider the following 300-residue polypeptide: Tyrosine recombinase XerC (300 aa).

The Core-binding (CB) domain occupies 2–88 (TQEGKLEQQF…SLRSFYTFLL (87 aa)). The Tyr recombinase domain occupies 109–294 (RLPKFFYSEE…TKEHLKSTYM (186 aa)). Active-site residues include R150, K174, H246, R249, and H272. Y281 acts as the O-(3'-phospho-DNA)-tyrosine intermediate in catalysis.

This sequence belongs to the 'phage' integrase family. XerC subfamily. In terms of assembly, forms a cyclic heterotetrameric complex composed of two molecules of XerC and two molecules of XerD.

It localises to the cytoplasm. Site-specific tyrosine recombinase, which acts by catalyzing the cutting and rejoining of the recombining DNA molecules. The XerC-XerD complex is essential to convert dimers of the bacterial chromosome into monomers to permit their segregation at cell division. It also contributes to the segregational stability of plasmids. This is Tyrosine recombinase XerC from Listeria welshimeri serovar 6b (strain ATCC 35897 / DSM 20650 / CCUG 15529 / CIP 8149 / NCTC 11857 / SLCC 5334 / V8).